The primary structure comprises 414 residues: Snake venom metalloproteinase atrolysin-B (414 aa).

An N-terminal signal peptide occupies residues 1 to 20; that stretch reads MIEVLLVTICLAVFPYQGSS. The propeptide occupies 21–190; the sequence is IILESGNVND…KASDLNLNPD (170 aa). Pyrrolidone carboxylic acid is present on glutamine 191. Residues 197-393 enclose the Peptidase M12B domain; the sequence is RYIELVVVAD…YKPQCILNKP (197 aa). Glutamate 200 and aspartate 284 together coordinate Ca(2+). Cystine bridges form between cysteine 308-cysteine 388 and cysteine 348-cysteine 355. Histidine 333 lines the Zn(2+) pocket. Glutamate 334 is a catalytic residue. The Zn(2+) site is built by histidine 337 and histidine 343. Cysteine 388, asparagine 391, valine 403, asparagine 406, leucine 408, glutamate 410, and glutamate 413 together coordinate Ca(2+). Residues 394-414 constitute a propeptide that is removed on maturation; it reads LRIDPVSTPVSGNELLEAGEE.

Belongs to the venom metalloproteinase (M12B) family. P-I subfamily. In terms of assembly, monomer. Zn(2+) serves as cofactor. In terms of processing, the N-terminus is blocked. As to expression, expressed by the venom gland.

The protein localises to the secreted. It carries out the reaction Cleavage of 5-His-|-Leu-6, 10-His-|-Leu-11, 14-Ala-|-Leu-15, 16-Tyr-|-Leu-17 and 23-Gly-|-Phe-24 of insulin B chain. Identical to the cleavage of insulin B chain by atrolysin C. Also cleaves Xaa-|-Ser bonds in glucagon.. Snake venom metalloproteinase that impairs hemostasis in the envenomed animal. This is Snake venom metalloproteinase atrolysin-B from Crotalus atrox (Western diamondback rattlesnake).